Reading from the N-terminus, the 223-residue chain is Glutathione S-transferase alpha I (223 aa).

Residue Met1 is modified to N-acetylmethionine. Ala2 bears the N-acetylalanine; in Glutathione S-transferase alpha I, N-terminally processed mark. Residues 3-83 (RKPLLHYFNG…YVANKHNLYG (81 aa)) enclose the GST N-terminal domain. Residue Lys4 is modified to N6-succinyllysine. Glutathione is bound by residues Tyr9, Arg45, 54 to 55 (QV), and 67 to 68 (QT). The GST C-terminal domain occupies 85–208 (DMKERALIDM…QPGSQRKPPM (124 aa)).

Belongs to the GST superfamily. Alpha family. As to quaternary structure, homodimer or heterodimer of GSTA1 and GSTA2. In terms of tissue distribution, liver and lung.

The protein localises to the cytoplasm. The enzyme catalyses RX + glutathione = an S-substituted glutathione + a halide anion + H(+). It catalyses the reaction prostaglandin A2 + glutathione = prostaglandin A2-S-(R)-glutathione. The catalysed reaction is prostaglandin J2 + glutathione = prostaglandin J2-S-(R)-glutathione. It carries out the reaction (13S)-hydroperoxy-(9Z,11E)-octadecadienoate + 2 glutathione = (13S)-hydroxy-(9Z,11E)-octadecadienoate + glutathione disulfide + H2O. The enzyme catalyses androst-5-ene-3,17-dione = androst-4-ene-3,17-dione. Functionally, glutathione S-transferase that catalyzes the nucleophilic attack of the sulfur atom of glutathione on the electrophilic groups of a wide range of exogenous and endogenous compounds. Involved in the formation of glutathione conjugates of both prostaglandin A2 (PGA2) and prostaglandin J2 (PGJ2). It also catalyzes the isomerization of D5-androstene-3,17-dione (AD) into D4-androstene-3,17-dione and may therefore play an important role in hormone biosynthesis. Through its glutathione-dependent peroxidase activity toward the fatty acid hydroperoxide (13S)-hydroperoxy-(9Z,11E)-octadecadienoate/13-HPODE it is also involved in the metabolism of oxidized linoleic acid. The protein is Glutathione S-transferase alpha I of Oryctolagus cuniculus (Rabbit).